The following is a 165-amino-acid chain: Cyclic pyranopterin monophosphate synthase (165 aa).

Substrate is bound by residues 76–78 (LCH) and 114–115 (ME). Residue D129 is part of the active site.

It belongs to the MoaC family. As to quaternary structure, homohexamer; trimer of dimers.

The enzyme catalyses (8S)-3',8-cyclo-7,8-dihydroguanosine 5'-triphosphate = cyclic pyranopterin phosphate + diphosphate. It functions in the pathway cofactor biosynthesis; molybdopterin biosynthesis. In terms of biological role, catalyzes the conversion of (8S)-3',8-cyclo-7,8-dihydroguanosine 5'-triphosphate to cyclic pyranopterin monophosphate (cPMP). The polypeptide is Cyclic pyranopterin monophosphate synthase (Brucella canis (strain ATCC 23365 / NCTC 10854 / RM-666)).